A 39-amino-acid chain; its full sequence is Cytochrome b6-f complex subunit 5 (39 aa).

Residues 5 to 25 (LLCGIVLGLVPITLLGLFVAA) form a helical membrane-spanning segment.

This sequence belongs to the PetG family. The 4 large subunits of the cytochrome b6-f complex are cytochrome b6, subunit IV (17 kDa polypeptide, PetD), cytochrome f and the Rieske protein, while the 4 small subunits are PetG, PetL, PetM and PetN. The complex functions as a dimer.

Its subcellular location is the cellular thylakoid membrane. Its function is as follows. Component of the cytochrome b6-f complex, which mediates electron transfer between photosystem II (PSII) and photosystem I (PSI), cyclic electron flow around PSI, and state transitions. PetG is required for either the stability or assembly of the cytochrome b6-f complex. The protein is Cytochrome b6-f complex subunit 5 of Prochlorococcus marinus (strain SARG / CCMP1375 / SS120).